The primary structure comprises 425 residues: Nucleoporin nup45 (425 aa).

The span at 1–10 (MFGLNKTPSF) shows a compositional bias: polar residues. Positions 1 to 207 (MFGLNKTPSF…GFGLSNNTQT (207 aa)) are disordered. Over residues 11 to 27 (GSTGTQNQNTGTSAGTG) the composition is skewed to low complexity. Over residues 28 to 45 (LFSSNTFGNNTQANTPAS) the composition is skewed to polar residues. The segment covering 47–56 (GFGGVTGGAF) has biased composition (gly residues). Over residues 72–89 (PNATSTTPGLNLFGQNPQ) the composition is skewed to polar residues. Low complexity-rich tracts occupy residues 112–126 (NQNQTQAQPAQAAPT) and 135–150 (QNQTQSQTQPAQANTS). The segment covering 167–207 (NRPNTSTFGQFSTQPASAGLFGQSTQPSGSTGFGLSNNTQT) has biased composition (polar residues). Residues serine 289 and serine 290 each carry the phosphoserine modification.

It is found in the cytoplasm. The protein localises to the nucleus. The protein resides in the nuclear pore complex. In terms of biological role, functions as a component of the nuclear pore complex (NPC). NPC components, collectively referred to as nucleoporins (NUPs), can play the role of both NPC structural components and of docking or interaction partners for transiently associated nuclear transport factors. Active directional transport is assured by both, a Phe-Gly (FG) repeat affinity gradient for these transport factors across the NPC and a transport cofactor concentration gradient across the nuclear envelope. This is Nucleoporin nup45 (nup45) from Schizosaccharomyces pombe (strain 972 / ATCC 24843) (Fission yeast).